Reading from the N-terminus, the 495-residue chain is ATP synthase subunit beta, chloroplastic (495 aa).

172 to 179 (GGAGVGKT) lines the ATP pocket.

It belongs to the ATPase alpha/beta chains family. As to quaternary structure, F-type ATPases have 2 components, CF(1) - the catalytic core - and CF(0) - the membrane proton channel. CF(1) has five subunits: alpha(3), beta(3), gamma(1), delta(1), epsilon(1). CF(0) has four main subunits: a(1), b(1), b'(1) and c(9-12).

Its subcellular location is the plastid. It is found in the chloroplast thylakoid membrane. The enzyme catalyses ATP + H2O + 4 H(+)(in) = ADP + phosphate + 5 H(+)(out). In terms of biological role, produces ATP from ADP in the presence of a proton gradient across the membrane. The catalytic sites are hosted primarily by the beta subunits. The chain is ATP synthase subunit beta, chloroplastic from Scilla siberica (Siberian squill).